Reading from the N-terminus, the 461-residue chain is Glyceraldehyde-3-phosphate dehydrogenase-like protein (461 aa).

A Phosphothreonine modification is found at Thr-421.

The protein belongs to the glyceraldehyde-3-phosphate dehydrogenase family.

The polypeptide is Glyceraldehyde-3-phosphate dehydrogenase-like protein (gap2) (Pseudomonas aeruginosa (strain UCBPP-PA14)).